A 119-amino-acid chain; its full sequence is Holo-[acyl-carrier-protein] synthase (119 aa).

Positions 8 and 60 each coordinate Mg(2+).

Belongs to the P-Pant transferase superfamily. AcpS family. Requires Mg(2+) as cofactor.

The protein resides in the cytoplasm. The catalysed reaction is apo-[ACP] + CoA = holo-[ACP] + adenosine 3',5'-bisphosphate + H(+). Functionally, transfers the 4'-phosphopantetheine moiety from coenzyme A to a Ser of acyl-carrier-protein. In Mycoplasma pneumoniae (strain ATCC 29342 / M129 / Subtype 1) (Mycoplasmoides pneumoniae), this protein is Holo-[acyl-carrier-protein] synthase.